Here is a 105-residue protein sequence, read N- to C-terminus: Mini zinc finger protein 2 (105 aa).

The tract at residues 1 to 29 is disordered; the sequence is MGPQQDRSAAKPYANGSTAAAAAAGRKEN. Residues 35 to 84 form a ZF-HD dimerization-type; degenerate zinc finger; the sequence is YRECQRNHAASIGGHAVDGCREFMASGADGTAAALLCAACGCHQSFHRRE.

In terms of assembly, homo- and heterodimers.

The protein localises to the cytoplasm. In terms of biological role, inhibits zinc finger homeodomain (ZHD) transcription factors, by interacting with them to prevent both their nuclear localization and their DNA-binding properties. This is Mini zinc finger protein 2 (MIF2) from Oryza sativa subsp. indica (Rice).